The chain runs to 447 residues: GTPase Der (447 aa).

EngA-type G domains are found at residues 3 to 167 (PVIA…FAER) and 181 to 354 (TRIA…AAAM). Residues 9 to 16 (GRPNVGKS), 56 to 60 (DTGGF), 119 to 122 (NKAE), 187 to 194 (GRPNVGKS), 234 to 238 (DTAGL), and 299 to 302 (NKWD) each bind GTP. The KH-like domain maps to 355-439 (VKLPTPKLTR…PLRIEFRTNK (85 aa)).

Belongs to the TRAFAC class TrmE-Era-EngA-EngB-Septin-like GTPase superfamily. EngA (Der) GTPase family. As to quaternary structure, associates with the 50S ribosomal subunit.

In terms of biological role, GTPase that plays an essential role in the late steps of ribosome biogenesis. The polypeptide is GTPase Der (Ralstonia pickettii (strain 12J)).